We begin with the raw amino-acid sequence, 338 residues long: Phenylalanine--tRNA ligase alpha subunit (338 aa).

Glu-253 is a binding site for Mg(2+).

The protein belongs to the class-II aminoacyl-tRNA synthetase family. Phe-tRNA synthetase alpha subunit type 1 subfamily. In terms of assembly, tetramer of two alpha and two beta subunits. It depends on Mg(2+) as a cofactor.

The protein resides in the cytoplasm. The catalysed reaction is tRNA(Phe) + L-phenylalanine + ATP = L-phenylalanyl-tRNA(Phe) + AMP + diphosphate + H(+). The polypeptide is Phenylalanine--tRNA ligase alpha subunit (Pelobacter propionicus (strain DSM 2379 / NBRC 103807 / OttBd1)).